The sequence spans 94 residues: Neutrophil defensin 1 (94 aa).

The signal sequence occupies residues Met-1–Ala-19. Residues Glu-20 to Ala-38 constitute a propeptide that is removed on maturation. 3 disulfides stabilise this stretch: Cys-66-Cys-94, Cys-68-Cys-83, and Cys-73-Cys-93. Arg-78 is subject to ADP-ribosylarginine; by ART1. Tyr-85 is subject to Phosphotyrosine. Arg-88 carries the post-translational modification ADP-ribosylarginine; by ART1.

This sequence belongs to the alpha-defensin family. In terms of assembly, tetramer. Dimer. Interacts with RETN. As to quaternary structure, (Microbial infection) Interacts with HIV-1 surface protein gp120. (Microbial infection) Interacts with herpes virus 1 (HHV1) envelope glycoprotein B; this interaction inhibits viral infection. In terms of processing, ADP-ribosylation drastically reduces cytotoxic and antibacterial activities, and enhances IL8 production. Post-translationally, phosphorylation at Tyr-85 has been found in some cancer cell lines, and interferes with ADP-ribosylation.

It is found in the secreted. In terms of biological role, effector molecule of the innate immune system that acts via antibiotic-like properties against a broad array of infectious agents including bacteria, fungi, and viruses or by promoting the activation and maturation of some APCs. Interacts with the essential precursor of cell wall synthesis lipid II to inhibit bacterial cell wall synthesis. Inhibits adenovirus infection via inhibition of viral disassembly at the vertex region, thereby restricting the release of internal capsid protein pVI, which is required for endosomal membrane penetration during cell entry. In addition, interaction with adenovirus capsid leads to the redirection of viral particles to TLR4 thereby promoting a NLRP3-mediated inflammasome response and interleukin 1-beta (IL-1beta) release. Induces the production of proinflammatory cytokines including type I interferon (IFN) in plasmacytoid dendritic cells (pDCs) by triggering the degradation of NFKBIA and nuclear translocation of IRF1, both of which are required for activation of pDCs. This is Neutrophil defensin 1 (DEFA1) from Homo sapiens (Human).